We begin with the raw amino-acid sequence, 501 residues long: Lysine--tRNA ligase (501 aa).

Mg(2+) contacts are provided by glutamate 412 and glutamate 419.

Belongs to the class-II aminoacyl-tRNA synthetase family. Homodimer. Requires Mg(2+) as cofactor.

Its subcellular location is the cytoplasm. It catalyses the reaction tRNA(Lys) + L-lysine + ATP = L-lysyl-tRNA(Lys) + AMP + diphosphate. This is Lysine--tRNA ligase (lysS) from Pasteurella multocida (strain Pm70).